Here is a 355-residue protein sequence, read N- to C-terminus: Holliday junction branch migration complex subunit RuvB (355 aa).

Residues 4 to 195 are large ATPase domain (RuvB-L); sequence TDKLTGADRL…FGIVARLEFY (192 aa). Residues leucine 34, arginine 35, glycine 76, lysine 79, threonine 80, threonine 81, 142–144, arginine 185, tyrosine 195, and arginine 232 each bind ATP; that span reads EDY. Residue threonine 80 coordinates Mg(2+). Positions 196-266 are small ATPAse domain (RuvB-S); the sequence is TPDELARIVA…LADAALEMLD (71 aa). Positions 269 to 355 are head domain (RuvB-H); it reads SVGFDLMDRK…DGGADLAEGL (87 aa). Arginine 305, arginine 324, and arginine 329 together coordinate DNA.

The protein belongs to the RuvB family. Homohexamer. Forms an RuvA(8)-RuvB(12)-Holliday junction (HJ) complex. HJ DNA is sandwiched between 2 RuvA tetramers; dsDNA enters through RuvA and exits via RuvB. An RuvB hexamer assembles on each DNA strand where it exits the tetramer. Each RuvB hexamer is contacted by two RuvA subunits (via domain III) on 2 adjacent RuvB subunits; this complex drives branch migration. In the full resolvosome a probable DNA-RuvA(4)-RuvB(12)-RuvC(2) complex forms which resolves the HJ.

The protein resides in the cytoplasm. The enzyme catalyses ATP + H2O = ADP + phosphate + H(+). Functionally, the RuvA-RuvB-RuvC complex processes Holliday junction (HJ) DNA during genetic recombination and DNA repair, while the RuvA-RuvB complex plays an important role in the rescue of blocked DNA replication forks via replication fork reversal (RFR). RuvA specifically binds to HJ cruciform DNA, conferring on it an open structure. The RuvB hexamer acts as an ATP-dependent pump, pulling dsDNA into and through the RuvAB complex. RuvB forms 2 homohexamers on either side of HJ DNA bound by 1 or 2 RuvA tetramers; 4 subunits per hexamer contact DNA at a time. Coordinated motions by a converter formed by DNA-disengaged RuvB subunits stimulates ATP hydrolysis and nucleotide exchange. Immobilization of the converter enables RuvB to convert the ATP-contained energy into a lever motion, pulling 2 nucleotides of DNA out of the RuvA tetramer per ATP hydrolyzed, thus driving DNA branch migration. The RuvB motors rotate together with the DNA substrate, which together with the progressing nucleotide cycle form the mechanistic basis for DNA recombination by continuous HJ branch migration. Branch migration allows RuvC to scan DNA until it finds its consensus sequence, where it cleaves and resolves cruciform DNA. The protein is Holliday junction branch migration complex subunit RuvB of Cupriavidus metallidurans (strain ATCC 43123 / DSM 2839 / NBRC 102507 / CH34) (Ralstonia metallidurans).